The chain runs to 131 residues: (R)-mandelonitrile lyase (131 aa).

Positions 42 to 104 (VTFEPGARTA…WHGAAPTTAM (63 aa)) constitute a Cupin type-2 domain. The Mn(2+) site is built by His53, His55, Gln59, His94, and His96.

Belongs to the cupin domain-containing hydroxynitrile lyase family. Mn(2+) is required as a cofactor.

The enzyme catalyses (R)-mandelonitrile = benzaldehyde + hydrogen cyanide. Hydroxynitrile lyase which catalyzes mandelonitrile formation from benzaldehyde and hydrogen cyanide with high stereoselectivity in presence of manganese. This chain is (R)-mandelonitrile lyase, found in Granulicella tundricola (strain ATCC BAA-1859 / DSM 23138 / MP5ACTX9).